Consider the following 224-residue polypeptide: Haloacetate dehalogenase H-2 (224 aa).

The active-site Nucleophile is the aspartate 10.

Belongs to the HAD-like hydrolase superfamily. S-2-haloalkanoic acid dehalogenase family.

The enzyme catalyses a haloacetate + H2O = a halide anion + glycolate + H(+). The chain is Haloacetate dehalogenase H-2 (dehH2) from Moraxella sp. (strain B).